The following is a 215-amino-acid chain: Protein Syd (215 aa).

This sequence belongs to the Syd family.

Its subcellular location is the cell inner membrane. Functionally, interacts with the SecY protein in vivo. May bind preferentially to an uncomplexed state of SecY, thus functioning either as a chelating agent for excess SecY in the cell or as a regulatory factor that negatively controls the translocase function. The sequence is that of Protein Syd from Shewanella amazonensis (strain ATCC BAA-1098 / SB2B).